Reading from the N-terminus, the 72-residue chain is Translation initiation factor IF-1 (72 aa).

One can recognise an S1-like domain in the interval 1–72 (MAREDHIEME…SKGRIVYRAR (72 aa)).

Belongs to the IF-1 family. As to quaternary structure, component of the 30S ribosomal translation pre-initiation complex which assembles on the 30S ribosome in the order IF-2 and IF-3, IF-1 and N-formylmethionyl-tRNA(fMet); mRNA recruitment can occur at any time during PIC assembly.

The protein localises to the cytoplasm. In terms of biological role, one of the essential components for the initiation of protein synthesis. Stabilizes the binding of IF-2 and IF-3 on the 30S subunit to which N-formylmethionyl-tRNA(fMet) subsequently binds. Helps modulate mRNA selection, yielding the 30S pre-initiation complex (PIC). Upon addition of the 50S ribosomal subunit IF-1, IF-2 and IF-3 are released leaving the mature 70S translation initiation complex. The chain is Translation initiation factor IF-1 from Chromohalobacter salexigens (strain ATCC BAA-138 / DSM 3043 / CIP 106854 / NCIMB 13768 / 1H11).